We begin with the raw amino-acid sequence, 57 residues long: MPAIQPPLYPTFLLLILLSLIITLYVWIISTITYKTAVRHAALHQRSFSRWSLDHSL.

Over 1–8 (MPAIQPPL) the chain is Virion surface. The chain crosses the membrane as a helical span at residues 9–29 (YPTFLLLILLSLIITLYVWII). Topologically, residues 30-57 (STITYKTAVRHAALHQRSFSRWSLDHSL) are intravirion.

The protein belongs to the rubulavirus small hydrophobic protein family. In terms of assembly, interacts with host TNFRSF1A, RIPK1 and IRAK1; these interactions interfere with host NF-kappa-B activation at the level of receptor complexes. Interacts with host protein UBQLN4.

Its subcellular location is the virion membrane. It localises to the host cell membrane. In terms of biological role, plays a role in the inhibition of the host NF-kappa-B pathway. This inhibition occurs at the receptor level, by preventing the signaling of TNFR1 as well as IL-1R and TLR3. This chain is Small hydrophobic protein (SH), found in Mumps virus genotype B (strain Miyahara vaccine) (MuV).